We begin with the raw amino-acid sequence, 560 residues long: Light-independent protochlorophyllide reductase subunit N (560 aa).

Residues Cys-24, Cys-49, and Cys-109 each coordinate [4Fe-4S] cluster. Residues 173–182 (NSLFNQSSNS) are compositionally biased toward low complexity. Positions 173–210 (NSLFNQSSNSPENLKTLNTKKDTFQNSTENSKTFSAEK) are disordered. Over residues 196 to 206 (FQNSTENSKTF) the composition is skewed to polar residues.

It belongs to the BchN/ChlN family. In terms of assembly, protochlorophyllide reductase is composed of three subunits; ChlL, ChlN and ChlB. Forms a heterotetramer of two ChlB and two ChlN subunits. [4Fe-4S] cluster serves as cofactor.

The protein localises to the plastid. It is found in the chloroplast. It catalyses the reaction chlorophyllide a + oxidized 2[4Fe-4S]-[ferredoxin] + 2 ADP + 2 phosphate = protochlorophyllide a + reduced 2[4Fe-4S]-[ferredoxin] + 2 ATP + 2 H2O. Its pathway is porphyrin-containing compound metabolism; chlorophyll biosynthesis (light-independent). Its function is as follows. Component of the dark-operative protochlorophyllide reductase (DPOR) that uses Mg-ATP and reduced ferredoxin to reduce ring D of protochlorophyllide (Pchlide) to form chlorophyllide a (Chlide). This reaction is light-independent. The NB-protein (ChlN-ChlB) is the catalytic component of the complex. The polypeptide is Light-independent protochlorophyllide reductase subunit N (Tetradesmus obliquus (Green alga)).